We begin with the raw amino-acid sequence, 155 residues long: Cyanate hydratase (155 aa).

Catalysis depends on residues Arg92, Glu95, and Ser118.

Belongs to the cyanase family.

It catalyses the reaction cyanate + hydrogencarbonate + 3 H(+) = NH4(+) + 2 CO2. Functionally, catalyzes the reaction of cyanate with bicarbonate to produce ammonia and carbon dioxide. This chain is Cyanate hydratase, found in Mycobacterium avium (strain 104).